The sequence spans 357 residues: RNA 3'-terminal phosphate cyclase (357 aa).

ATP contacts are provided by residues glutamine 102 and 293–296 (HMGD). Histidine 319 functions as the Tele-AMP-histidine intermediate in the catalytic mechanism.

This sequence belongs to the RNA 3'-terminal cyclase family. Type 1 subfamily.

Its subcellular location is the cytoplasm. It carries out the reaction a 3'-end 3'-phospho-ribonucleotide-RNA + ATP = a 3'-end 2',3'-cyclophospho-ribonucleotide-RNA + AMP + diphosphate. In terms of biological role, catalyzes the conversion of 3'-phosphate to a 2',3'-cyclic phosphodiester at the end of RNA. The mechanism of action of the enzyme occurs in 3 steps: (A) adenylation of the enzyme by ATP; (B) transfer of adenylate to an RNA-N3'P to produce RNA-N3'PP5'A; (C) and attack of the adjacent 2'-hydroxyl on the 3'-phosphorus in the diester linkage to produce the cyclic end product. The biological role of this enzyme is unknown but it is likely to function in some aspects of cellular RNA processing. The polypeptide is RNA 3'-terminal phosphate cyclase (Staphylothermus marinus (strain ATCC 43588 / DSM 3639 / JCM 9404 / F1)).